A 355-amino-acid chain; its full sequence is Histidinol-phosphate aminotransferase (355 aa).

Lysine 218 bears the N6-(pyridoxal phosphate)lysine mark.

The protein belongs to the class-II pyridoxal-phosphate-dependent aminotransferase family. Histidinol-phosphate aminotransferase subfamily. As to quaternary structure, homodimer. The cofactor is pyridoxal 5'-phosphate.

It carries out the reaction L-histidinol phosphate + 2-oxoglutarate = 3-(imidazol-4-yl)-2-oxopropyl phosphate + L-glutamate. It participates in amino-acid biosynthesis; L-histidine biosynthesis; L-histidine from 5-phospho-alpha-D-ribose 1-diphosphate: step 7/9. This chain is Histidinol-phosphate aminotransferase, found in Pelodictyon phaeoclathratiforme (strain DSM 5477 / BU-1).